The primary structure comprises 139 residues: Small ribosomal subunit protein uS12 (139 aa).

3-methylthioaspartic acid is present on Asp102. Residues Asp116–Lys139 form a disordered region. Positions Ser124 to Lys139 are enriched in basic residues.

It belongs to the universal ribosomal protein uS12 family. In terms of assembly, part of the 30S ribosomal subunit. Contacts proteins S8 and S17. May interact with IF1 in the 30S initiation complex.

In terms of biological role, with S4 and S5 plays an important role in translational accuracy. Functionally, interacts with and stabilizes bases of the 16S rRNA that are involved in tRNA selection in the A site and with the mRNA backbone. Located at the interface of the 30S and 50S subunits, it traverses the body of the 30S subunit contacting proteins on the other side and probably holding the rRNA structure together. The combined cluster of proteins S8, S12 and S17 appears to hold together the shoulder and platform of the 30S subunit. The sequence is that of Small ribosomal subunit protein uS12 from Mesomycoplasma hyopneumoniae (strain 7448) (Mycoplasma hyopneumoniae).